The primary structure comprises 237 residues: Uridylate kinase (237 aa).

ATP is bound at residue Lys-9 to Gly-12. Gly-51 contributes to the UMP binding site. Positions 52 and 56 each coordinate ATP. Residues Asp-71 and Cys-132–Thr-139 contribute to the UMP site. Thr-159, Tyr-165, and Asp-168 together coordinate ATP.

It belongs to the UMP kinase family. As to quaternary structure, homohexamer.

The protein resides in the cytoplasm. It carries out the reaction UMP + ATP = UDP + ADP. The protein operates within pyrimidine metabolism; CTP biosynthesis via de novo pathway; UDP from UMP (UMPK route): step 1/1. Its activity is regulated as follows. Inhibited by UTP. Catalyzes the reversible phosphorylation of UMP to UDP. The protein is Uridylate kinase of Prochlorococcus marinus (strain SARG / CCMP1375 / SS120).